The primary structure comprises 359 residues: Phospho-N-acetylmuramoyl-pentapeptide-transferase (359 aa).

The Periplasmic portion of the chain corresponds to 1–25; sequence MLYQLALLLKDYWFAFNVLKYITFR. A helical transmembrane segment spans residues 26-48; the sequence is SFTAVLIAFFLTLVLSPSFINRL. Over 49–74 the chain is Cytoplasmic; it reads RKIQRLFGGYVREYTPESHEVKKYTP. The muraymycin D2 site is built by Lys70 and Thr75. Residues 75-92 form a helical membrane-spanning segment; the sequence is TMGGIVILIVVTLSTLLL. Residues 93–98 are Periplasmic-facing; it reads MRWDIK. Residues 99-120 form a helical membrane-spanning segment; that stretch reads YTWVVLLSFLSFGTIGFWDDYV. Over 121 to 130 the chain is Cytoplasmic; that stretch reads KLKNKKGISI. Residues 131–152 form a helical membrane-spanning segment; it reads KTKFLLQVLSASLISVLIYYWA. Residues 153 to 172 are Periplasmic-facing; the sequence is DIDTILYFPFFKELYVDLGV. Residues 173–194 traverse the membrane as a helical segment; sequence LYLPFAVFVIVGSANAVNLTDG. Muraymycin D2-binding residues include Asn190, Asp193, and Asp196. Residues 195-197 lie on the Cytoplasmic side of the membrane; it reads LDG. Residues 198-218 traverse the membrane as a helical segment; it reads LAIGPAMTTATALGVVAYAVG. Topologically, residues 219 to 233 are periplasmic; the sequence is HSKIAQYLNIPYVPY. A helical membrane pass occupies residues 234-255; that stretch reads AGELTVFCFALVGAGLGFLWFN. The Cytoplasmic segment spans residues 256–264; sequence SFPAQMFMG. Muraymycin D2 contacts are provided by Gly264 and Ser268. The helical transmembrane segment at 265-280 threads the bilayer; that stretch reads DVGSLSIGASLATVAL. Over 281-284 the chain is Periplasmic; it reads LTKS. A helical transmembrane segment spans residues 285–310; it reads EFIFAVAAGVFVFETISVILQIIYFR. Residues Gln305 and Ala321 each contribute to the muraymycin D2 site. The Cytoplasmic portion of the chain corresponds to 311-332; the sequence is WTGGKRLFKRAPFHHHLELNGL. Residues 333–355 form a helical membrane-spanning segment; sequence PEPKIVVRMWIISILLAIIAISM. At 356-359 the chain is on the periplasmic side; it reads LKLR.

This sequence belongs to the glycosyltransferase 4 family. MraY subfamily. Homodimer. Requires Mg(2+) as cofactor. Mn(2+) is required as a cofactor.

It is found in the cell inner membrane. It catalyses the reaction UDP-N-acetyl-alpha-D-muramoyl-L-alanyl-gamma-D-glutamyl-meso-2,6-diaminopimeloyl-D-alanyl-D-alanine + di-trans,octa-cis-undecaprenyl phosphate = di-trans,octa-cis-undecaprenyl diphospho-N-acetyl-alpha-D-muramoyl-L-alanyl-D-glutamyl-meso-2,6-diaminopimeloyl-D-alanyl-D-alanine + UMP. Its pathway is cell wall biogenesis; peptidoglycan biosynthesis. Its activity is regulated as follows. Inhibited by natural nucleoside antibiotics including tunicamycin, capuramycin and muraymycin. Usually the cofactor magnesium is not required for antibiotic binding. Its function is as follows. Catalyzes the initial step of the lipid cycle reactions in the biosynthesis of the cell wall peptidoglycan: transfers peptidoglycan precursor phospho-MurNAc-pentapeptide from UDP-MurNAc-pentapeptide onto the lipid carrier undecaprenyl phosphate, yielding undecaprenyl-pyrophosphoryl-MurNAc-pentapeptide, known as lipid I. This chain is Phospho-N-acetylmuramoyl-pentapeptide-transferase, found in Aquifex aeolicus (strain VF5).